The following is a 478-amino-acid chain: Cytochrome P450 monooxygenase ATR3 (478 aa).

The chain crosses the membrane as a helical span at residues 20 to 42 (AVAFVTASALYYVLPAAISHIQL). Residues N159 and N268 are each glycosylated (N-linked (GlcNAc...) asparagine).

Belongs to the cytochrome P450 family. The cofactor is heme.

The protein localises to the membrane. It participates in mycotoxin biosynthesis. Its function is as follows. Cytochrome P450 monooxygenase; part of the core atranone cluster (CAC) which products are predicted to catalyze most or all steps of mycotoxin atranone synthesis, starting from geranylgeranyl pyrophosphate (GGPP). The initial cyclization of GGPP to dolabellane is probably performed by the terpene cyclase ATR13. The Baeyer-Villiger oxidation near the end of the atranone synthesis, which converts atranones D and E to atranones F and G is predicted to be catalyzed by the monooxygenase ATR8. Of the CAC's other predicted gene products, the reducing PKS ATR6 might synthesize a polyketide chain. This polyketide is probably transferred onto the atranone backbone by the polyketide transferase ATR5. Other predicted CAC products include 4 oxygenases (ATR2, ATR3, ATR4, and ATR14), 3 short-chain reductases (ATR7, ATR9, and ATR10), and a methyltransferase (ATR12). These may all be involved in the various steps of atranone biosynthesis, although their specific roles must await experimental determination. The chain is Cytochrome P450 monooxygenase ATR3 from Stachybotrys chlorohalonatus (strain IBT 40285).